The chain runs to 132 residues: Interleukin-4 (132 aa).

Residues 1-24 (MGLTSQLIPTLVCLLALTSTFVHG) form the signal peptide. N-linked (GlcNAc...) asparagine glycosylation is found at Asn-28, Asn-45, Asn-62, and Asn-101. 2 disulfide bridges follow: Cys-48/Cys-84 and Cys-70/Cys-104.

The protein belongs to the IL-4/IL-13 family.

The protein localises to the secreted. Functionally, participates in at least several B-cell activation processes as well as of other cell types. It is a costimulator of DNA-synthesis. It induces the expression of class II MHC molecules on resting B-cells. It enhances both secretion and cell surface expression of IgE and IgG1. It also regulates the expression of the low affinity Fc receptor for IgE (CD23) on both lymphocytes and monocytes. Positively regulates IL31RA expression in macrophages. Stimulates autophagy in dendritic cells by interfering with mTORC1 signaling and through the induction of RUFY4. The polypeptide is Interleukin-4 (IL4) (Ailuropoda melanoleuca (Giant panda)).